A 322-amino-acid chain; its full sequence is tRNA U34 carboxymethyltransferase (322 aa).

Residues Lys-90, Trp-104, Lys-109, Gly-129, 151–153 (DPT), 179–180 (ME), Met-195, Tyr-199, and Arg-314 contribute to the carboxy-S-adenosyl-L-methionine site.

Belongs to the class I-like SAM-binding methyltransferase superfamily. CmoB family. As to quaternary structure, homotetramer.

It carries out the reaction carboxy-S-adenosyl-L-methionine + 5-hydroxyuridine(34) in tRNA = 5-carboxymethoxyuridine(34) in tRNA + S-adenosyl-L-homocysteine + H(+). In terms of biological role, catalyzes carboxymethyl transfer from carboxy-S-adenosyl-L-methionine (Cx-SAM) to 5-hydroxyuridine (ho5U) to form 5-carboxymethoxyuridine (cmo5U) at position 34 in tRNAs. The polypeptide is tRNA U34 carboxymethyltransferase (Alcanivorax borkumensis (strain ATCC 700651 / DSM 11573 / NCIMB 13689 / SK2)).